The primary structure comprises 199 residues: dITP/XTP pyrophosphatase (199 aa).

8–13 (TRNKGK) contacts substrate. Mg(2+) is bound by residues Glu41 and Asp70. Asp70 functions as the Proton acceptor in the catalytic mechanism. Substrate is bound by residues Ser71, 153-156 (FGYD), Lys176, and 181-182 (HR).

This sequence belongs to the HAM1 NTPase family. Homodimer. The cofactor is Mg(2+).

The enzyme catalyses XTP + H2O = XMP + diphosphate + H(+). It carries out the reaction dITP + H2O = dIMP + diphosphate + H(+). It catalyses the reaction ITP + H2O = IMP + diphosphate + H(+). Functionally, pyrophosphatase that catalyzes the hydrolysis of nucleoside triphosphates to their monophosphate derivatives, with a high preference for the non-canonical purine nucleotides XTP (xanthosine triphosphate), dITP (deoxyinosine triphosphate) and ITP. Seems to function as a house-cleaning enzyme that removes non-canonical purine nucleotides from the nucleotide pool, thus preventing their incorporation into DNA/RNA and avoiding chromosomal lesions. The polypeptide is dITP/XTP pyrophosphatase (Geobacter sulfurreducens (strain ATCC 51573 / DSM 12127 / PCA)).